The following is a 357-amino-acid chain: Protein RecA (357 aa).

Residue 67–74 (GPESSGKT) coordinates ATP.

Belongs to the RecA family.

The protein localises to the cytoplasm. Its function is as follows. Can catalyze the hydrolysis of ATP in the presence of single-stranded DNA, the ATP-dependent uptake of single-stranded DNA by duplex DNA, and the ATP-dependent hybridization of homologous single-stranded DNAs. It interacts with LexA causing its activation and leading to its autocatalytic cleavage. This Leifsonia xyli subsp. xyli (strain CTCB07) protein is Protein RecA.